Reading from the N-terminus, the 188-residue chain is Archaetidylinositol phosphate synthase (188 aa).

Transmembrane regions (helical) follow at residues 20–40 and 51–71; these read LASL…ITLL and ILAG…GALA. 4 residues coordinate Mg(2+): Asp-64, Asp-67, Asp-85, and Asp-89. Asp-89 functions as the Proton acceptor in the catalytic mechanism. Transmembrane regions (helical) follow at residues 96–116 and 147–167; these read ILFG…LTLI and IIII…YLVA.

The protein belongs to the CDP-alcohol phosphatidyltransferase class-I family. It depends on Mn(2+) as a cofactor. Mg(2+) is required as a cofactor.

The protein localises to the cell membrane. The enzyme catalyses CDP-2,3-bis-O-(phytanyl)-sn-glycerol + 1D-myo-inositol 3-phosphate = saturated 1-archaetidyl-1D-myo-inositol 3-phosphate + CMP + H(+). It functions in the pathway lipid metabolism; phospholipid metabolism. In terms of biological role, catalyzes the formation of archaetidylinositol phosphate (AIP) from CDP-archaeol (CDP-ArOH or CDP-2,3-bis-(O-phytanyl)-sn-glycerol) and 1L-myo-inositol 1-phosphate (IP or 1D-myo-inositol 3-phosphate). AIP is a precursor of archaetidyl-myo-inositol (AI), an ether-type inositol phospholipid ubiquitously distributed in archaea membranes and essential for glycolipid biosynthesis in archaea. This chain is Archaetidylinositol phosphate synthase, found in Pyrococcus horikoshii (strain ATCC 700860 / DSM 12428 / JCM 9974 / NBRC 100139 / OT-3).